The sequence spans 423 residues: Histidine--tRNA ligase (423 aa).

The protein belongs to the class-II aminoacyl-tRNA synthetase family. Homodimer.

It localises to the cytoplasm. The catalysed reaction is tRNA(His) + L-histidine + ATP = L-histidyl-tRNA(His) + AMP + diphosphate + H(+). The chain is Histidine--tRNA ligase from Laribacter hongkongensis (strain HLHK9).